A 366-amino-acid polypeptide reads, in one-letter code: tRNA/tmRNA (uracil-C(5))-methyltransferase (366 aa).

Positions 190, 218, 223, 239, and 299 each coordinate S-adenosyl-L-methionine. Cys-324 (nucleophile) is an active-site residue. The Proton acceptor role is filled by Glu-358.

Belongs to the class I-like SAM-binding methyltransferase superfamily. RNA M5U methyltransferase family. TrmA subfamily.

It catalyses the reaction uridine(54) in tRNA + S-adenosyl-L-methionine = 5-methyluridine(54) in tRNA + S-adenosyl-L-homocysteine + H(+). It carries out the reaction uridine(341) in tmRNA + S-adenosyl-L-methionine = 5-methyluridine(341) in tmRNA + S-adenosyl-L-homocysteine + H(+). Its function is as follows. Dual-specificity methyltransferase that catalyzes the formation of 5-methyluridine at position 54 (m5U54) in all tRNAs, and that of position 341 (m5U341) in tmRNA (transfer-mRNA). The polypeptide is tRNA/tmRNA (uracil-C(5))-methyltransferase (Escherichia coli O127:H6 (strain E2348/69 / EPEC)).